The primary structure comprises 883 residues: Phosphoenolpyruvate carboxylase (883 aa).

Residues His-138 and Lys-546 contribute to the active site.

Belongs to the PEPCase type 1 family. It depends on Mg(2+) as a cofactor.

The catalysed reaction is oxaloacetate + phosphate = phosphoenolpyruvate + hydrogencarbonate. Functionally, forms oxaloacetate, a four-carbon dicarboxylic acid source for the tricarboxylic acid cycle. The chain is Phosphoenolpyruvate carboxylase from Salmonella schwarzengrund (strain CVM19633).